The primary structure comprises 2699 residues: UPF0648 protein C3H5.09c (2699 aa).

N-linked (GlcNAc...) asparagine glycosylation occurs at asparagine 21. A helical transmembrane segment spans residues 24–44; the sequence is FVWVVIATGFLFHLVLFVLSY. Asparagine 288, asparagine 293, asparagine 334, asparagine 345, asparagine 433, asparagine 507, asparagine 551, asparagine 655, asparagine 760, asparagine 993, asparagine 1000, asparagine 1003, asparagine 1006, and asparagine 1009 each carry an N-linked (GlcNAc...) asparagine glycan. The interval 975-1021 is disordered; sequence KAKDPSPKSASESSSFYQNGSDIDDNDSNSSNTSNHTTENANAQQRK. Residues 981–995 are compositionally biased toward low complexity; the sequence is PKSASESSSFYQNGS. A coiled-coil region spans residues 1006 to 1033; it reads NTSNHTTENANAQQRKLEDLNRSFEDFL. A compositionally biased stretch (polar residues) spans 1010 to 1019; it reads HTTENANAQQ. Asparagine 1026, asparagine 1039, asparagine 1046, asparagine 1236, asparagine 1255, asparagine 1344, asparagine 1527, asparagine 1595, asparagine 1791, asparagine 1916, asparagine 2032, asparagine 2048, asparagine 2256, asparagine 2285, asparagine 2388, asparagine 2407, asparagine 2417, asparagine 2508, and asparagine 2622 each carry an N-linked (GlcNAc...) asparagine glycan. Residues 1758 to 1818 are a coiled coil; the sequence is QYELLQKRRK…TLSDHYRLLE (61 aa). A disordered region spans residues 2393–2447; it reads FPHIYSRNHDKRKENGSQGEADNSNYSGSLMRRRTNDQEEDALATPSSSRRDSRS. Polar residues predominate over residues 2408–2420; it reads GSQGEADNSNYSG. Disordered regions lie at residues 2606 to 2632 and 2647 to 2676; these read AEEN…LNSP and ADIV…ARVD. Residues 2617–2632 show a composition bias toward polar residues; that stretch reads SAISRNHSTRSSLNSP.

It belongs to the UPF0648 family.

It is found in the membrane. This Schizosaccharomyces pombe (strain 972 / ATCC 24843) (Fission yeast) protein is UPF0648 protein C3H5.09c.